The chain runs to 352 residues: DNA polymerase IV (352 aa).

The UmuC domain maps to 6-187 (IIHIDCDCFY…LPVSKLHGVG (182 aa)). 2 residues coordinate Mg(2+): Asp-10 and Asp-105. Residue Glu-106 is part of the active site.

It belongs to the DNA polymerase type-Y family. As to quaternary structure, monomer. Requires Mg(2+) as cofactor.

The protein localises to the cytoplasm. It catalyses the reaction DNA(n) + a 2'-deoxyribonucleoside 5'-triphosphate = DNA(n+1) + diphosphate. In terms of biological role, poorly processive, error-prone DNA polymerase involved in untargeted mutagenesis. Copies undamaged DNA at stalled replication forks, which arise in vivo from mismatched or misaligned primer ends. These misaligned primers can be extended by PolIV. Exhibits no 3'-5' exonuclease (proofreading) activity. May be involved in translesional synthesis, in conjunction with the beta clamp from PolIII. This is DNA polymerase IV from Ectopseudomonas mendocina (strain ymp) (Pseudomonas mendocina).